The primary structure comprises 355 residues: Meiotic coiled-coil protein 4 (355 aa).

Residues 298–338 (QRLSRTEINKEIIEIEKLELEVVQFQMSIANLINTQVEVTN) adopt a coiled-coil conformation.

It is found in the cytoplasm. Has a role in meiosis. This Schizosaccharomyces pombe (strain 972 / ATCC 24843) (Fission yeast) protein is Meiotic coiled-coil protein 4 (mcp4).